We begin with the raw amino-acid sequence, 305 residues long: Hepatitis A virus cellular receptor 1 homolog (305 aa).

The first 21 residues, 1–21 (MNQIQVFISGLILLLPGAVDS), serve as a signal peptide directing secretion. Residues 22-122 (YVEVKGVVGH…PGWFNDQKVT (101 aa)) form the Ig-like V-type domain. Topologically, residues 22–237 (YVEVKGVVGH…GKPQKNPTKG (216 aa)) are extracellular. 3 cysteine pairs are disulfide-bonded: C37/C108, C49/C60, and C55/C107. Residues 129–185 (PEIPTRPPTRPTTTRPTATGRPTTISTRSTHVPTSIRVSTSTPPTSTHTWTHKPEPT) form a disordered region. Composition is skewed to low complexity over residues 139–152 (PTTT…RPTT) and 161–177 (PTSI…STHT). N-linked (GlcNAc...) asparagine glycosylation is present at N208. Residues 238–258 (FYVGICIAALLLLLLVSTVAI) traverse the membrane as a helical segment. At 259–305 (TRYILMKRKSASLSVVAFRVSKIEALQNAAVVHSRAEDNIYIVEDRP) the chain is on the cytoplasmic side.

Belongs to the immunoglobulin superfamily. TIM family. Interacts with STAM. Interacts with SELPLG. Expressed by stimulated T-cells. Expressed during primary antigen stimulation. Expressed at higher levels on B rather than T-cells, both constitutively and after activation.

The protein resides in the cell membrane. In terms of biological role, phosphatidylserine receptor that plays an important functional role in regulatory B-cells homeostasis including generation, expansion and suppressor functions. As P-selectin/SELPLG ligand, plays a specialized role in activated but not naive T-cell trafficking during inflammatory responses. Controls thereby T-cell accumulation in the inflamed central nervous system (CNS) and the induction of autoimmune disease. Also regulates expression of various anti-inflammatory cytokines and co-inhibitory ligands including IL10. Acts as a regulator of T-cell proliferation. May play a role in kidney injury and repair. The polypeptide is Hepatitis A virus cellular receptor 1 homolog (Havcr1) (Mus musculus (Mouse)).